The primary structure comprises 573 residues: Glutamate--tRNA ligase (573 aa).

Residues 106-116 (PNPDGAFHLGN) carry the 'HIGH' region motif.

It belongs to the class-I aminoacyl-tRNA synthetase family. Glutamate--tRNA ligase type 2 subfamily.

It localises to the cytoplasm. It carries out the reaction tRNA(Glu) + L-glutamate + ATP = L-glutamyl-tRNA(Glu) + AMP + diphosphate. Its function is as follows. Catalyzes the attachment of glutamate to tRNA(Glu) in a two-step reaction: glutamate is first activated by ATP to form Glu-AMP and then transferred to the acceptor end of tRNA(Glu). The polypeptide is Glutamate--tRNA ligase (Thermococcus onnurineus (strain NA1)).